A 606-amino-acid polypeptide reads, in one-letter code: Threonine dehydratase 1 biosynthetic, chloroplastic (606 aa).

Residue Lys-154 is modified to N6-(pyridoxal phosphate)lysine. ACT-like domains are found at residues 432-504 (AVLA…NLTD) and 526-597 (LLCR…MESL).

Belongs to the serine/threonine dehydratase family. Pyridoxal 5'-phosphate is required as a cofactor. In terms of tissue distribution, expressed constitutively in all tissues examined including root, stem, petiole, leaf, immature flower bud, unopened flower and opened flower with the highest expression in opened flower and lowest in leaf.

The protein localises to the plastid. The protein resides in the chloroplast. It catalyses the reaction L-threonine = 2-oxobutanoate + NH4(+). The protein operates within amino-acid biosynthesis; L-isoleucine biosynthesis; 2-oxobutanoate from L-threonine: step 1/1. With respect to regulation, strongly inhibited by 1 mM isoleucine. Has a housekeeping role in isoleucine biosynthesis. The polypeptide is Threonine dehydratase 1 biosynthetic, chloroplastic (Solanum lycopersicum (Tomato)).